The primary structure comprises 335 residues: Nucleoid-associated protein KPK_1538 (335 aa).

This sequence belongs to the YejK family.

The protein resides in the cytoplasm. It is found in the nucleoid. The sequence is that of Nucleoid-associated protein KPK_1538 from Klebsiella pneumoniae (strain 342).